We begin with the raw amino-acid sequence, 734 residues long: Amino-acid acetyltransferase, mitochondrial (734 aa).

The tract at residues 384–433 is disordered; the sequence is YSETSSRSTRAEADSNFNLRDDIPLSSFTEQKSGELEYSPRHQNDSPTQQ. Basic and acidic residues-rich tracts occupy residues 392–406 and 415–427; these read TRAE…RDDI and KSGE…RHQN. One can recognise an N-acetyltransferase domain in the interval 555 to 724; the sequence is GVPQISLTDP…YEAVCKTIEP (170 aa).

This sequence belongs to the acetyltransferase family.

It is found in the mitochondrion. The enzyme catalyses L-glutamate + acetyl-CoA = N-acetyl-L-glutamate + CoA + H(+). It participates in amino-acid biosynthesis; L-arginine biosynthesis; N(2)-acetyl-L-ornithine from L-glutamate: step 1/4. N-acetylglutamate synthase involved in arginine biosynthesis. The chain is Amino-acid acetyltransferase, mitochondrial (arg2) from Botryotinia fuckeliana (strain B05.10) (Noble rot fungus).